We begin with the raw amino-acid sequence, 100 residues long: Large ribosomal subunit protein uL23 (100 aa).

This sequence belongs to the universal ribosomal protein uL23 family. Part of the 50S ribosomal subunit. Contacts protein L29, and trigger factor when it is bound to the ribosome.

Its function is as follows. One of the early assembly proteins it binds 23S rRNA. One of the proteins that surrounds the polypeptide exit tunnel on the outside of the ribosome. Forms the main docking site for trigger factor binding to the ribosome. This Aliivibrio fischeri (strain MJ11) (Vibrio fischeri) protein is Large ribosomal subunit protein uL23.